A 620-amino-acid polypeptide reads, in one-letter code: Toxin coregulated pilus biosynthesis protein I (620 aa).

A Methyl-accepting transducer domain is found at 344 to 580; sequence TMNDLSIKQT…DVAKQMEDIR (237 aa).

It belongs to the methyl-accepting chemotaxis (MCP) protein family.

The protein resides in the cell inner membrane. Functionally, may function as an environmental regulator of TCP biogenesis. Negatively regulates the synthesis of the major pilin subunit of TCP (TcpA). The sequence is that of Toxin coregulated pilus biosynthesis protein I (tcpI) from Vibrio cholerae serotype O1 (strain ATCC 39315 / El Tor Inaba N16961).